A 152-amino-acid chain; its full sequence is MEFTTRTIPAQKHIALVAHDHCKQSLLDWVGTNKQQLTEHTLYATGTTGNLIQSNTGLPVKSMLSGPMGGDQQVGALISEGKIDLMIFFWDPLNAVPHDPDVKALLRLATVWNIPVATNRATADFLINSALFKEPVQIAIPDYQRYLQDRLK.

Positions 6–152 (RTIPAQKHIA…YQRYLQDRLK (147 aa)) constitute an MGS-like domain. Substrate is bound by residues H19, K23, 45-48 (TGTT), and 65-66 (SG). Residue D71 is the Proton donor/acceptor of the active site. H98 provides a ligand contact to substrate.

It belongs to the methylglyoxal synthase family.

The catalysed reaction is dihydroxyacetone phosphate = methylglyoxal + phosphate. Catalyzes the formation of methylglyoxal from dihydroxyacetone phosphate. The protein is Methylglyoxal synthase of Pectobacterium atrosepticum (strain SCRI 1043 / ATCC BAA-672) (Erwinia carotovora subsp. atroseptica).